We begin with the raw amino-acid sequence, 360 residues long: Phospho-N-acetylmuramoyl-pentapeptide-transferase (360 aa).

10 consecutive transmembrane segments (helical) span residues 21–41, 73–93, 98–118, 132–152, 168–188, 199–219, 236–256, 263–283, 288–308, and 338–358; these read YITF…LWIG, TMGG…WADL, IWFV…DDYW, WKYF…YAVG, VMPQ…VGTS, GLAI…AWAT, AGEL…FLWY, VFMG…IAVL, LLLV…ILQV, and VIVR…VTLK.

This sequence belongs to the glycosyltransferase 4 family. MraY subfamily. Mg(2+) is required as a cofactor.

It localises to the cell inner membrane. The catalysed reaction is UDP-N-acetyl-alpha-D-muramoyl-L-alanyl-gamma-D-glutamyl-meso-2,6-diaminopimeloyl-D-alanyl-D-alanine + di-trans,octa-cis-undecaprenyl phosphate = di-trans,octa-cis-undecaprenyl diphospho-N-acetyl-alpha-D-muramoyl-L-alanyl-D-glutamyl-meso-2,6-diaminopimeloyl-D-alanyl-D-alanine + UMP. It participates in cell wall biogenesis; peptidoglycan biosynthesis. Its function is as follows. Catalyzes the initial step of the lipid cycle reactions in the biosynthesis of the cell wall peptidoglycan: transfers peptidoglycan precursor phospho-MurNAc-pentapeptide from UDP-MurNAc-pentapeptide onto the lipid carrier undecaprenyl phosphate, yielding undecaprenyl-pyrophosphoryl-MurNAc-pentapeptide, known as lipid I. This Actinobacillus pleuropneumoniae serotype 5b (strain L20) protein is Phospho-N-acetylmuramoyl-pentapeptide-transferase.